Here is a 454-residue protein sequence, read N- to C-terminus: Peroxisome assembly protein 10 (454 aa).

Residues 1-23 lie on the Peroxisomal matrix side of the membrane; that stretch reads MATQPPPARPPPPLTSSPYPYAA. A helical membrane pass occupies residues 24–53; it reads APDIIRAHQKDAYFQGVLANRLSDLHRRLR. Gly54 is a topological domain (cytoplasmic). Residues 55–76 form a helical membrane-spanning segment; it reads ARSAHAWAAETRTFAAALYLCL. The Peroxisomal matrix portion of the chain corresponds to 77–132; sequence TTLLGNRTLGEEYCDLVQVEEAPSKLFASSSSKAADDHIYENGLGGGGDGGPLLPS. A helical membrane pass occupies residues 133–165; sequence LPRRAGYILTAIVLPHLASRALPSVRSAIRKRL. Residues 166-201 lie on the Cytoplasmic side of the membrane; that stretch reads QSRLATLSRRRQQTGTKSGSGRGGRGGGGGITEYRV. Residues 171 to 194 form a disordered region; that stretch reads TLSRRRQQTGTKSGSGRGGRGGGG. The segment covering 183–194 has biased composition (gly residues); the sequence is SGSGRGGRGGGG. A helical membrane pass occupies residues 202-229; it reads LRYLLTHLTPLTSGAHFRAATLAVFYFT. At 230–276 the chain is on the peroxisomal matrix side; the sequence is GAYYELSKWVWGLRYVFTTRAGRVVDDDHNRHHHSPQHGGGNGGRAG. A helical membrane pass occupies residues 277–296; the sequence is YEVLGVLLVVQMAVRAWLHV. Residues 297–454 are Cytoplasmic-facing; it reads REQLSSGSVA…VQHILPLRAA (158 aa). A disordered region spans residues 302–329; that stretch reads SGSVAGGGGEEEEDGEDGFRERTAFGPG. Zn(2+) is bound by residues Cys402, Cys405, Cys417, His419, Cys422, Cys425, Cys436, and Cys439. The RING-type zinc-finger motif lies at 402 to 440; the sequence is CTLCLEELKDPAATQCGHVFCWACIGDWVREKPECPLCR.

It belongs to the pex2/pex10/pex12 family. In terms of assembly, component of the PEX2-PEX10-PEX12 retrotranslocation channel, composed of PEX2, PEX10 and PEX12.

The protein localises to the peroxisome membrane. The catalysed reaction is S-ubiquitinyl-[E2 ubiquitin-conjugating enzyme]-L-cysteine + [acceptor protein]-L-lysine = [E2 ubiquitin-conjugating enzyme]-L-cysteine + N(6)-ubiquitinyl-[acceptor protein]-L-lysine.. It functions in the pathway protein modification; protein ubiquitination. With respect to regulation, the E3 ubiquitin-protein ligase activity is stimulated by PEX12. Functionally, E3 ubiquitin-protein ligase component of a retrotranslocation channel required for peroxisome organization by mediating export of the PEX5 receptor from peroxisomes to the cytosol, thereby promoting PEX5 recycling. The retrotranslocation channel is composed of PEX2, PEX10 and PEX12; each subunit contributing transmembrane segments that coassemble into an open channel that specifically allows the passage of PEX5 through the peroxisomal membrane. PEX10 also regulates PEX5 recycling by acting as a E3 ubiquitin-protein ligase. When PEX5 recycling is compromised, PEX10 catalyzes polyubiquitination of PEX5 during its passage through the retrotranslocation channel, leading to its degradation. The polypeptide is Peroxisome assembly protein 10 (Thermothelomyces thermophilus (strain ATCC 42464 / BCRC 31852 / DSM 1799) (Sporotrichum thermophile)).